The chain runs to 285 residues: ATP synthase gamma chain (285 aa).

Belongs to the ATPase gamma chain family. In terms of assembly, F-type ATPases have 2 components, CF(1) - the catalytic core - and CF(0) - the membrane proton channel. CF(1) has five subunits: alpha(3), beta(3), gamma(1), delta(1), epsilon(1). CF(0) has three main subunits: a, b and c.

It is found in the cell membrane. Functionally, produces ATP from ADP in the presence of a proton gradient across the membrane. The gamma chain is believed to be important in regulating ATPase activity and the flow of protons through the CF(0) complex. The sequence is that of ATP synthase gamma chain from Dehalococcoides mccartyi (strain ATCC BAA-2100 / JCM 16839 / KCTC 5957 / BAV1).